The primary structure comprises 159 residues: Ribosome maturation factor RimP (159 aa).

It belongs to the RimP family.

The protein resides in the cytoplasm. Functionally, required for maturation of 30S ribosomal subunits. This Geobacter metallireducens (strain ATCC 53774 / DSM 7210 / GS-15) protein is Ribosome maturation factor RimP.